The following is a 97-amino-acid chain: Large ribosomal subunit protein bL28 (97 aa).

Belongs to the bacterial ribosomal protein bL28 family.

The protein is Large ribosomal subunit protein bL28 of Sphingopyxis alaskensis (strain DSM 13593 / LMG 18877 / RB2256) (Sphingomonas alaskensis).